The primary structure comprises 506 residues: Heat stress transcription factor A-1 (506 aa).

Residues 157–207 adopt a coiled-coil conformation; the sequence is MEEEIEMLKRDKNVLMQELVRLRQQQQTTDHQLQTLGKRLQGMEQRQQQMM. Residues 164–214 are hydrophobic repeat HR-A/B; sequence LKRDKNVLMQELVRLRQQQQTTDHQLQTLGKRLQGMEQRQQQMMSFLAKAM. The tract at residues 231-254 is disordered; it reads RRRIVASNKKRRLPKQDGSLDSES. Over residues 232 to 243 the composition is skewed to basic residues; it reads RRIVASNKKRRL. Positions 239 to 242 match the Nuclear localization signal motif; it reads KKRR. The AHA signature appears at 449-456; the sequence is DSFWEQFL.

This sequence belongs to the HSF family. Class A subfamily. In terms of assembly, homotrimer. Exhibits temperature-dependent phosphorylation.

The protein localises to the nucleus. In terms of biological role, transcriptional regulator that specifically binds DNA of heat shock promoter elements (HSE). This chain is Heat stress transcription factor A-1 (HSFA1), found in Oryza sativa subsp. japonica (Rice).